The following is a 67-amino-acid chain: Preprofallaxidin-4 (67 aa).

A signal peptide spans 1–22 (MASLKKFLFLVLFLGMVSLSIC). A propeptide spanning residues 23-46 (DKEKREGENEEEEEEHEEESEEKR) is cleaved from the precursor. The segment at 24–48 (KEKREGENEEEEEEHEEESEEKRGL) is disordered. Residues 30–42 (ENEEEEEEHEEES) are compositionally biased toward acidic residues.

This sequence belongs to the frog skin active peptide (FSAP) family. Dermaseptin subfamily. Expressed by the skin glands.

It is found in the secreted. This is Preprofallaxidin-4 from Litoria fallax (Eastern dwarf tree frog).